A 487-amino-acid polypeptide reads, in one-letter code: L-asparagine permease 2 (487 aa).

12 consecutive transmembrane segments (helical) span residues 26-46 (QLQM…GAGG), 50-70 (SAGP…FLIL), 98-118 (VAFV…IVDT), 133-153 (PIPQ…MNLI), 163-183 (FWAS…GTVF), 214-234 (IVLV…VGIA), 256-276 (IACF…YTAY), 290-310 (IGID…ALSS), 341-361 (TGVP…GIIL), 369-389 (AFEI…ATIV), 414-434 (SPFS…LMYF), and 440-460 (PWMI…WYLV).

Belongs to the amino acid-polyamine-organocation (APC) superfamily. Amino acid transporter (AAT) (TC 2.A.3.1) family.

Its subcellular location is the cell membrane. Dual function in both nitrogen assimilation and in protection against acid stress during infection. Involved in asparagine uptake. The sequence is that of L-asparagine permease 2 (ansP2) from Mycobacterium bovis (strain ATCC BAA-935 / AF2122/97).